We begin with the raw amino-acid sequence, 609 residues long: UvrABC system protein C (609 aa).

The GIY-YIG domain maps to 15 to 92; that stretch reads TGSGVYQIQD…IKQFRPRYNV (78 aa). In terms of domain architecture, UVR spans 202 to 237; it reads DQVIIKLTERMEVASENLVFEEAAHYRDQIRQLRRL.

The protein belongs to the UvrC family. In terms of assembly, interacts with UvrB in an incision complex.

Its subcellular location is the cytoplasm. The UvrABC repair system catalyzes the recognition and processing of DNA lesions. UvrC both incises the 5' and 3' sides of the lesion. The N-terminal half is responsible for the 3' incision and the C-terminal half is responsible for the 5' incision. In Coxiella burnetii (strain Dugway 5J108-111), this protein is UvrABC system protein C.